The sequence spans 364 residues: Fructose-bisphosphate aldolase A (364 aa).

Y5 bears the Phosphotyrosine mark. T9 carries the phosphothreonine modification. 2 positions are modified to phosphoserine: S36 and S39. K42 carries the post-translational modification N6-acetyllysine; alternate. K42 participates in a covalent cross-link: Glycyl lysine isopeptide (Lys-Gly) (interchain with G-Cter in SUMO1); alternate. K42 participates in a covalent cross-link: Glycyl lysine isopeptide (Lys-Gly) (interchain with G-Cter in SUMO2); alternate. R43 serves as a coordination point for beta-D-fructose 1,6-bisphosphate. Residue S46 is modified to Phosphoserine. At K99 the chain carries N6-(2-hydroxyisobutyryl)lysine. N6-acetyllysine is present on K108. K111 is modified (N6-acetyllysine; alternate). At K111 the chain carries N6-malonyllysine; alternate. S132 is modified (phosphoserine). Residue K147 is modified to N6-(2-hydroxyisobutyryl)lysine. E188 serves as the catalytic Proton acceptor. Catalysis depends on K230, which acts as the Schiff-base intermediate with dihydroxyacetone-P. S272 is modified (phosphoserine). Residues 272–274 (SGG), S301, and R304 contribute to the beta-D-fructose 1,6-bisphosphate site. Position 312 is an N6-malonyllysine (K312). An N6-acetyllysine modification is found at K330.

Belongs to the class I fructose-bisphosphate aldolase family. Homotetramer. Interacts with SNX9 and WAS. Interacts with FBP2; the interaction blocks FBP2 inhibition by physiological concentrations of AMP and reduces inhibition by Ca(2+).

It localises to the cytoplasm. It is found in the myofibril. The protein localises to the sarcomere. Its subcellular location is the i band. The protein resides in the m line. It catalyses the reaction beta-D-fructose 1,6-bisphosphate = D-glyceraldehyde 3-phosphate + dihydroxyacetone phosphate. The protein operates within carbohydrate degradation; glycolysis; D-glyceraldehyde 3-phosphate and glycerone phosphate from D-glucose: step 4/4. Its function is as follows. Catalyzes the reversible conversion of beta-D-fructose 1,6-bisphosphate (FBP) into two triose phosphate and plays a key role in glycolysis and gluconeogenesis. In addition, may also function as scaffolding protein. The polypeptide is Fructose-bisphosphate aldolase A (Homo sapiens (Human)).